A 505-amino-acid polypeptide reads, in one-letter code: Deoxyguanosinetriphosphate triphosphohydrolase (505 aa).

An HD domain is found at 66-273 (RLTHSMEVQQ…MEAADDISYC (208 aa)).

The protein belongs to the dGTPase family. Type 1 subfamily. In terms of assembly, homotetramer. Mg(2+) is required as a cofactor.

It carries out the reaction dGTP + H2O = 2'-deoxyguanosine + triphosphate + H(+). Inhibited by the action of reducing agents such as dithiothreitol and 2-mercaptoethanol. DGTPase preferentially hydrolyzes dGTP over the other canonical NTPs. The polypeptide is Deoxyguanosinetriphosphate triphosphohydrolase (Shigella boydii).